The sequence spans 434 residues: Mitochondrial distribution and morphology protein 10 (434 aa).

Belongs to the MDM10 family. Component of the ER-mitochondria encounter structure (ERMES) or MDM complex, composed of mmm1, mdm10, mdm12 and mdm34. Associates with the mitochondrial outer membrane sorting assembly machinery SAM(core) complex.

The protein resides in the mitochondrion outer membrane. Its function is as follows. Component of the ERMES/MDM complex, which serves as a molecular tether to connect the endoplasmic reticulum and mitochondria. Components of this complex are involved in the control of mitochondrial shape and protein biogenesis and may function in phospholipid exchange. mdm10 is involved in the late assembly steps of the general translocase of the mitochondrial outer membrane (TOM complex). Functions in the tom40-specific route of the assembly of outer membrane beta-barrel proteins, including the association of tom40 with the receptor tom22 and small TOM proteins. Can associate with the SAM(core) complex as well as the mdm12-mmm1 complex, both involved in late steps of the major beta-barrel assembly pathway, that is responsible for biogenesis of all outer membrane beta-barrel proteins. May act as a switch that shuttles between both complexes and channels precursor proteins into the tom40-specific pathway. Plays a role in mitochondrial morphology and in the inheritance of mitochondria. This chain is Mitochondrial distribution and morphology protein 10 (mdmB), found in Aspergillus niger (strain ATCC MYA-4892 / CBS 513.88 / FGSC A1513).